Consider the following 127-residue polypeptide: Large ribosomal subunit protein uL18 (127 aa).

The protein belongs to the universal ribosomal protein uL18 family. In terms of assembly, part of the 50S ribosomal subunit; part of the 5S rRNA/L5/L18/L25 subcomplex. Contacts the 5S and 23S rRNAs.

This is one of the proteins that bind and probably mediate the attachment of the 5S RNA into the large ribosomal subunit, where it forms part of the central protuberance. The chain is Large ribosomal subunit protein uL18 from Streptomyces avermitilis (strain ATCC 31267 / DSM 46492 / JCM 5070 / NBRC 14893 / NCIMB 12804 / NRRL 8165 / MA-4680).